The following is a 109-amino-acid chain: Iron-sulfur cluster assembly protein CyaY (109 aa).

It belongs to the frataxin family.

Involved in iron-sulfur (Fe-S) cluster assembly. May act as a regulator of Fe-S biogenesis. This Albidiferax ferrireducens (strain ATCC BAA-621 / DSM 15236 / T118) (Rhodoferax ferrireducens) protein is Iron-sulfur cluster assembly protein CyaY.